Reading from the N-terminus, the 339-residue chain is Phenylalanine--tRNA ligase alpha subunit (339 aa).

Residue glutamate 254 participates in Mg(2+) binding.

Belongs to the class-II aminoacyl-tRNA synthetase family. Phe-tRNA synthetase alpha subunit type 1 subfamily. Tetramer of two alpha and two beta subunits. It depends on Mg(2+) as a cofactor.

The protein localises to the cytoplasm. It catalyses the reaction tRNA(Phe) + L-phenylalanine + ATP = L-phenylalanyl-tRNA(Phe) + AMP + diphosphate + H(+). In Clostridium botulinum (strain Langeland / NCTC 10281 / Type F), this protein is Phenylalanine--tRNA ligase alpha subunit.